A 199-amino-acid polypeptide reads, in one-letter code: dITP/XTP pyrophosphatase (199 aa).

Substrate is bound at residue 8-13; the sequence is SGNAGK. Asp69 (proton acceptor) is an active-site residue. Asp69 provides a ligand contact to Mg(2+). Substrate contacts are provided by residues Ser70, 154-157, Lys177, and 182-183; these read FGYN and HR.

Belongs to the HAM1 NTPase family. Homodimer. Mg(2+) is required as a cofactor.

It carries out the reaction XTP + H2O = XMP + diphosphate + H(+). The enzyme catalyses dITP + H2O = dIMP + diphosphate + H(+). It catalyses the reaction ITP + H2O = IMP + diphosphate + H(+). In terms of biological role, pyrophosphatase that catalyzes the hydrolysis of nucleoside triphosphates to their monophosphate derivatives, with a high preference for the non-canonical purine nucleotides XTP (xanthosine triphosphate), dITP (deoxyinosine triphosphate) and ITP. Seems to function as a house-cleaning enzyme that removes non-canonical purine nucleotides from the nucleotide pool, thus preventing their incorporation into DNA/RNA and avoiding chromosomal lesions. This chain is dITP/XTP pyrophosphatase, found in Xanthomonas campestris pv. campestris (strain 8004).